Consider the following 122-residue polypeptide: UPF0102 protein MUL_2060 (122 aa).

The protein belongs to the UPF0102 family.

This is UPF0102 protein MUL_2060 from Mycobacterium ulcerans (strain Agy99).